We begin with the raw amino-acid sequence, 483 residues long: Isocitrate dehydrogenase [NADP] (483 aa).

Threonine 74 is an NADP(+) binding site. 5 residues coordinate D-threo-isocitrate: serine 83, asparagine 85, arginine 89, arginine 99, and arginine 121. Aspartate 232 contacts Mg(2+). NADP(+)-binding positions include 264 to 270 (HGSAPDI) and asparagine 277.

This sequence belongs to the isocitrate and isopropylmalate dehydrogenases family. Homodimer. It depends on Mg(2+) as a cofactor. The cofactor is Mn(2+).

It catalyses the reaction D-threo-isocitrate + NADP(+) = 2-oxoglutarate + CO2 + NADPH. Functionally, catalyzes the oxidative decarboxylation of isocitrate to 2-oxoglutarate and carbon dioxide with the concomitant reduction of NADP(+). The sequence is that of Isocitrate dehydrogenase [NADP] (icd) from Rickettsia felis (strain ATCC VR-1525 / URRWXCal2) (Rickettsia azadi).